A 944-amino-acid chain; its full sequence is Leucine--tRNA ligase 2 (944 aa).

The short motif at proline 36 to histidine 46 is the 'HIGH' region element. A 'KMSKS' region motif is present at residues lysine 623 to serine 627. Residue lysine 626 coordinates ATP.

The protein belongs to the class-I aminoacyl-tRNA synthetase family.

The protein localises to the cytoplasm. It carries out the reaction tRNA(Leu) + L-leucine + ATP = L-leucyl-tRNA(Leu) + AMP + diphosphate. The chain is Leucine--tRNA ligase 2 from Saccharolobus solfataricus (strain ATCC 35092 / DSM 1617 / JCM 11322 / P2) (Sulfolobus solfataricus).